Here is a 332-residue protein sequence, read N- to C-terminus: Ribose-phosphate pyrophosphokinase (332 aa).

ATP is bound by residues 43 to 45 and 102 to 103; these read DGE and RQ. His-136 and Asp-176 together coordinate Mg(2+). Lys-199 is a catalytic residue. Residues Arg-201, Asp-225, and 229–233 contribute to the D-ribose 5-phosphate site; that span reads DTGGT.

It belongs to the ribose-phosphate pyrophosphokinase family. Class I subfamily. As to quaternary structure, homohexamer. It depends on Mg(2+) as a cofactor.

Its subcellular location is the cytoplasm. The catalysed reaction is D-ribose 5-phosphate + ATP = 5-phospho-alpha-D-ribose 1-diphosphate + AMP + H(+). The protein operates within metabolic intermediate biosynthesis; 5-phospho-alpha-D-ribose 1-diphosphate biosynthesis; 5-phospho-alpha-D-ribose 1-diphosphate from D-ribose 5-phosphate (route I): step 1/1. Involved in the biosynthesis of the central metabolite phospho-alpha-D-ribosyl-1-pyrophosphate (PRPP) via the transfer of pyrophosphoryl group from ATP to 1-hydroxyl of ribose-5-phosphate (Rib-5-P). This is Ribose-phosphate pyrophosphokinase from Mycoplasma genitalium (strain ATCC 33530 / DSM 19775 / NCTC 10195 / G37) (Mycoplasmoides genitalium).